Reading from the N-terminus, the 278-residue chain is TATA box-binding protein-associated factor RNA polymerase I subunit D (278 aa).

2 disordered regions span residues 20–71 (ANRS…SSFE) and 88–116 (KKRY…RNPI). The span at 22 to 33 (RSDNSSDSSLFK) shows a compositional bias: polar residues. The residue at position 23 (S23) is a Phosphoserine. Basic residues predominate over residues 88–99 (KKRYKKKKKRRY). 2 positions are modified to phosphoserine: S138 and S234.

In terms of assembly, component of the transcription factor SL1/TIF-IB complex, composed of TBP and at least TAF1A, TAF1B, TAF1C and TAF1D. Interacts with UBTF.

It is found in the nucleus. Functionally, component of the transcription factor SL1/TIF-IB complex, which is involved in the assembly of the PIC (preinitiation complex) during RNA polymerase I-dependent transcription. The rate of PIC formation probably is primarily dependent on the rate of association of SL1/TIF-IB with the rDNA promoter. SL1/TIF-IB is involved in stabilization of nucleolar transcription factor 1/UBTF on rDNA. Formation of SL1/TIF-IB excludes the association of TBP with TFIID subunits. The polypeptide is TATA box-binding protein-associated factor RNA polymerase I subunit D (TAF1D) (Homo sapiens (Human)).